The chain runs to 275 residues: Undecaprenyl-diphosphatase (275 aa).

A run of 7 helical transmembrane segments spans residues 1-21 (MTTFKAILLGIVQGLTEFLPV), 41-61 (ILFLTILLHVGTLFSVFFVYA), 95-115 (LLIIVATIPTGIIGLFFKDLF), 118-138 (FYNSTLIIGISLLVTGTLLWT), 192-212 (ATKFSFLISIPAILGATVFEV), 223-243 (FTLTMLIAGVLASFLSGVFAI), and 255-275 (LYYFSYYTWTVGSIVILFSLL).

The protein belongs to the UppP family.

Its subcellular location is the cell membrane. It carries out the reaction di-trans,octa-cis-undecaprenyl diphosphate + H2O = di-trans,octa-cis-undecaprenyl phosphate + phosphate + H(+). Functionally, catalyzes the dephosphorylation of undecaprenyl diphosphate (UPP). Confers resistance to bacitracin. The chain is Undecaprenyl-diphosphatase from Alkaliphilus metalliredigens (strain QYMF).